Consider the following 185-residue polypeptide: Protein GrpE (185 aa).

The tract at residues 1 to 40 is disordered; the sequence is MSEEKKDEILEQETVETKEEIKTEEAEQKTESLEEKVARL.

This sequence belongs to the GrpE family. Homodimer.

It is found in the cytoplasm. Participates actively in the response to hyperosmotic and heat shock by preventing the aggregation of stress-denatured proteins, in association with DnaK and GrpE. It is the nucleotide exchange factor for DnaK and may function as a thermosensor. Unfolded proteins bind initially to DnaJ; upon interaction with the DnaJ-bound protein, DnaK hydrolyzes its bound ATP, resulting in the formation of a stable complex. GrpE releases ADP from DnaK; ATP binding to DnaK triggers the release of the substrate protein, thus completing the reaction cycle. Several rounds of ATP-dependent interactions between DnaJ, DnaK and GrpE are required for fully efficient folding. The chain is Protein GrpE from Aliarcobacter butzleri (strain RM4018) (Arcobacter butzleri).